Here is a 283-residue protein sequence, read N- to C-terminus: MREITPKRIMEMKGKEKITMITAYDYPSALLADKAGFDIVFVGDSLGMVVYGEQNTLNVTMDQMIFHTRAVAKAVKRALVLADMPFGSYEVSVEEGVKNAIKLIQAGADAVKIEGGYDHRKLVKKLVRMGIPVMGHTGLTPQRYLRLGGYRIMGENEEEVEEILRDAKALEKAGAFAVVLEFVLADVAKLVTEEVSIPTIGIGSGPYVDGQVLVWHDVLGLYESSPPFAKRYANLREEILRAISEFRKEVKEGKFPGKEHYWEYQDKETFNRIKENVMRKLRL.

D44 and D83 together coordinate Mg(2+). Residues 44-45, D83, and K112 each bind 3-methyl-2-oxobutanoate; that span reads DS. Position 114 (E114) interacts with Mg(2+). Residue E181 is the Proton acceptor of the active site.

This sequence belongs to the PanB family. Homodecamer; pentamer of dimers. Requires Mg(2+) as cofactor.

It is found in the cytoplasm. It catalyses the reaction 3-methyl-2-oxobutanoate + (6R)-5,10-methylene-5,6,7,8-tetrahydrofolate + H2O = 2-dehydropantoate + (6S)-5,6,7,8-tetrahydrofolate. Its pathway is cofactor biosynthesis; coenzyme A biosynthesis. Functionally, catalyzes the reversible reaction in which hydroxymethyl group from 5,10-methylenetetrahydrofolate is transferred onto alpha-ketoisovalerate to form ketopantoate. The polypeptide is 3-methyl-2-oxobutanoate hydroxymethyltransferase (Pyrococcus furiosus (strain ATCC 43587 / DSM 3638 / JCM 8422 / Vc1)).